The following is a 543-amino-acid chain: ABC transport system permease protein p69 (543 aa).

Helical transmembrane passes span 18–38, 78–98, 115–135, 141–161, 211–231, 237–257, 288–308, 354–374, 379–399, 413–433, 482–502, and 510–530; these read IWYW…YSWI, AFFV…FSYW, ITIV…SNLF, ATLT…TTFF, TLLS…PLSI, LVLI…VVVF, IIFI…LVTI, ISLI…SCNL, FSIS…ILLF, IILV…SINF, LILF…NFFE, and GSVT…FLSV. The ABC transmembrane type-1 domain occupies 74–256; that stretch reads LAQTAFFVTG…TFLIFIEVVV (183 aa).

This sequence belongs to the binding-protein-dependent transport system permease family.

It is found in the cell membrane. Its function is as follows. Probably part of a high-affinity transport system. This is ABC transport system permease protein p69 (p69) from Mycoplasma genitalium (strain ATCC 33530 / DSM 19775 / NCTC 10195 / G37) (Mycoplasmoides genitalium).